The chain runs to 212 residues: Pyrrolidone-carboxylate peptidase (212 aa).

Catalysis depends on residues glutamate 80, cysteine 143, and histidine 165.

Belongs to the peptidase C15 family. Homotetramer.

It localises to the cytoplasm. It carries out the reaction Release of an N-terminal pyroglutamyl group from a polypeptide, the second amino acid generally not being Pro.. In terms of biological role, removes 5-oxoproline from various penultimate amino acid residues except L-proline. The polypeptide is Pyrrolidone-carboxylate peptidase (Aliivibrio fischeri (strain MJ11) (Vibrio fischeri)).